Here is a 204-residue protein sequence, read N- to C-terminus: Thymidylate kinase (204 aa).

9–16 serves as a coordination point for ATP; it reads GIEASGKT.

Belongs to the thymidylate kinase family.

It carries out the reaction dTMP + ATP = dTDP + ADP. Functionally, phosphorylation of dTMP to form dTDP in both de novo and salvage pathways of dTTP synthesis. The polypeptide is Thymidylate kinase (Sulfurihydrogenibium sp. (strain YO3AOP1)).